The following is a 158-amino-acid chain: Small ribosomal subunit protein bS6 (158 aa).

Residues 98–158 (EAPSAPLARR…DRDEDQNEEN (61 aa)) are disordered. Basic and acidic residues-rich tracts occupy residues 106 to 117 (RRGEDRDRDRGF) and 127 to 150 (DSGR…RSDR).

The protein belongs to the bacterial ribosomal protein bS6 family.

Binds together with bS18 to 16S ribosomal RNA. In Acidiphilium cryptum (strain JF-5), this protein is Small ribosomal subunit protein bS6.